A 264-amino-acid chain; its full sequence is [LysW]-aminoadipate/[LysW]-glutamate kinase (264 aa).

Residues 35–36 (GG), arginine 62, and asparagine 167 each bind substrate.

Belongs to the acetylglutamate kinase family. LysZ subfamily.

The protein resides in the cytoplasm. It catalyses the reaction [amino-group carrier protein]-C-terminal-N-(1,4-dicarboxybutan-1-yl)-L-glutamine + ATP = [amino-group carrier protein]-C-terminal-N-(1-carboxy-5-phosphooxy-5-oxopentan-1-yl)-L-glutamine + ADP. The catalysed reaction is [amino-group carrier protein]-C-terminal-gamma-(L-glutamyl)-L-glutamate + ATP = [amino-group carrier protein]-C-terminal-gamma-(5-phospho-L-glutamyl)-L-glutamate + ADP. It participates in amino-acid biosynthesis; L-lysine biosynthesis via AAA pathway; L-lysine from L-alpha-aminoadipate (Thermus route): step 2/5. Its pathway is amino-acid biosynthesis; L-arginine biosynthesis. In terms of biological role, involved in both the arginine and lysine biosynthetic pathways. Phosphorylates the LysW-bound precursors glutamate (for arginine biosynthesis), respectively alpha-aminoadipate (for lysine biosynthesis). The protein is [LysW]-aminoadipate/[LysW]-glutamate kinase of Saccharolobus solfataricus (strain ATCC 35092 / DSM 1617 / JCM 11322 / P2) (Sulfolobus solfataricus).